A 676-amino-acid polypeptide reads, in one-letter code: Beta-galactosidase BgaP (676 aa).

Residue R112 coordinates substrate. A Zn(2+)-binding site is contributed by C116. N150 lines the substrate pocket. E151 serves as the catalytic Proton donor. 3 residues coordinate Zn(2+): C156, C158, and C161. E308 functions as the Nucleophile in the catalytic mechanism. Residues W316 and 356 to 359 each bind substrate; that span reads EKYH.

This sequence belongs to the glycosyl hydrolase 42 family. As to quaternary structure, homodimer.

It catalyses the reaction Hydrolysis of terminal non-reducing beta-D-galactose residues in beta-D-galactosides.. With respect to regulation, no activity lost during treatment with 100 mM EDTA after 2 hours, and the addition of 1 mM MgCl(2), 1 mM CaCl(2) or 1 mM MnCl(2) has no effect. However, the enzyme activity is inhibited by Zn(2+), Cu(2+), Ni(2+) and Co(2+) to different extents. Addition of Na(+) or K(+) slightly stimulates the enzyme activity at low concentrations and the optimal concentration is 250 mM. A further increase of their concentration of ions above the optimum value results in a decrease in enzyme activity. The enzyme is still active even in the presence of Na(+) or K(+) at a concentration up to 5 M. Its function is as follows. Hydrolyzes lactose, o-nitrophenyl-beta-D-galactopyranoside (ONPG), p-nitrophenyl-beta-D-galactopyranoside (PNPG), 5-bromo-4-chloro-3-indolyl-beta-D-galactopyranoside (X-gal), o-nitrophenyl-beta-D-fucopyranoside, p-nitrophenyl-beta-D-mannoside, o-nitrophenyl-beta-D-glucoside, p-nitrophenyl-beta-D-xyloside, p-nitrophenyl-beta-D-cellobioside, p-nitrophenyl-beta-D-arabinoside, p-nitrophenyl-beta-D-lactoside, p-nitrophenyl-beta-D-galacturonide, p-nitrophenyl-beta-D-glucuronide and p-nitrophenyl-alpha-D-galactoside with highest level of activity with ONPG as substrate, intermediate level of activity with PNPG and lower levels of activity with all other chromogenic nitrophenyl analogs. Able to hydrolyze 34% of milk lactose after 60 minutes at 5 degrees Celsius. The polypeptide is Beta-galactosidase BgaP (Planococcus sp. (strain L4)).